A 435-amino-acid polypeptide reads, in one-letter code: MLDLKAVAADFESFERRLARRGEGAVQALAPVKPLAARRRELNVLLEKQKKEQAEANANIRQLARTDKDAVEGARASLRALGDEVKKTEAALGDVEAELTRLLMVVPNPPSDSVPDGKDEHDNVVVRTWGEQKAYGFTPKPHWELGEALGVLEWQQAAKLSGSRFTILKGAAARLERAIVSFFIDVHTSRGYTEILPPYLVTGETMTGTGQLPKFEEDLFKTTNEPPMYLIPTAEVPVTNMHRDEIFEASAMPVSYCAFSPCFRAEAGSAGRDTRGIMRQHQFHKVELVKLSKAEESEAEHEKMLDDACEVLRRLGLHFRVVLLCAGDMGFSSAKTYDIEVWCPGQGAYREISSVSNCEDFQARRIRVRYRGENGKPRLAHTLNGSGVAVGRTIVAILEQCQEADGTVVIPEPLRPYMGGLERIAAETFPRGVER.

233–235 (TAE) provides a ligand contact to L-serine. Position 264 to 266 (264 to 266 (RAE)) interacts with ATP. Glu287 lines the L-serine pocket. Position 351 to 354 (351 to 354 (EISS)) interacts with ATP. L-serine is bound at residue Ser386.

This sequence belongs to the class-II aminoacyl-tRNA synthetase family. Type-1 seryl-tRNA synthetase subfamily. In terms of assembly, homodimer. The tRNA molecule binds across the dimer.

The protein localises to the cytoplasm. It carries out the reaction tRNA(Ser) + L-serine + ATP = L-seryl-tRNA(Ser) + AMP + diphosphate + H(+). It catalyses the reaction tRNA(Sec) + L-serine + ATP = L-seryl-tRNA(Sec) + AMP + diphosphate + H(+). It functions in the pathway aminoacyl-tRNA biosynthesis; selenocysteinyl-tRNA(Sec) biosynthesis; L-seryl-tRNA(Sec) from L-serine and tRNA(Sec): step 1/1. Functionally, catalyzes the attachment of serine to tRNA(Ser). Is also able to aminoacylate tRNA(Sec) with serine, to form the misacylated tRNA L-seryl-tRNA(Sec), which will be further converted into selenocysteinyl-tRNA(Sec). The polypeptide is Serine--tRNA ligase (Anaeromyxobacter sp. (strain K)).